A 202-amino-acid chain; its full sequence is 3-isopropylmalate dehydratase small subunit (202 aa).

This sequence belongs to the LeuD family. LeuD type 1 subfamily. Heterodimer of LeuC and LeuD.

The catalysed reaction is (2R,3S)-3-isopropylmalate = (2S)-2-isopropylmalate. Its pathway is amino-acid biosynthesis; L-leucine biosynthesis; L-leucine from 3-methyl-2-oxobutanoate: step 2/4. Its function is as follows. Catalyzes the isomerization between 2-isopropylmalate and 3-isopropylmalate, via the formation of 2-isopropylmaleate. The protein is 3-isopropylmalate dehydratase small subunit of Blochmanniella pennsylvanica (strain BPEN).